Here is a 146-residue protein sequence, read N- to C-terminus: VHWSAEEKQLITSLWGKVNVADCGAEALARLLIVYPWTQRFFASFGNLSSPTAILGNPMVRAHGKKVLTSFGEAVKNLDNIKNTFAQLSELHCDKLHVDPENFRLLGDILIIVLAAHFAKDFTPECQAAWQKLVRVVAHALARKYH.

Positions 2-146 (HWSAEEKQLI…VAHALARKYH (145 aa)) constitute a Globin domain. Residues histidine 63 and histidine 92 each coordinate heme b.

Belongs to the globin family. As to quaternary structure, heterotetramer of two alpha chains and two beta chains. As to expression, red blood cells.

In terms of biological role, involved in oxygen transport from the lung to the various peripheral tissues. The chain is Hemoglobin subunit beta (HBB) from Phoenicopterus ruber (American flamingo).